Reading from the N-terminus, the 570-residue chain is Structure-specific endonuclease subunit EME1 (570 aa).

Over residues 1–12 (MALKKSSPSLDS) the composition is skewed to low complexity. The segment at 1-42 (MALKKSSPSLDSGDSDSEELPTFAFLKKEPSSTKRRQPEREE) is disordered. Phosphoserine occurs at positions 12 and 15. The segment covering 26-42 (LKKEPSSTKRRQPEREE) has biased composition (basic and acidic residues). Phosphoserine occurs at positions 84, 85, and 87. Lys103 participates in a covalent cross-link: Glycyl lysine isopeptide (Lys-Gly) (interchain with G-Cter in SUMO2). Ser111 and Ser117 each carry phosphoserine. Glycyl lysine isopeptide (Lys-Gly) (interchain with G-Cter in SUMO2) cross-links involve residues Lys136 and Lys141. Thr150 bears the Phosphothreonine mark. 2 disordered regions span residues 187–233 (KTNS…ERKN) and 372–400 (AQNPPRRGKQGANKQTKKQQQRQPEASIG). Positions 220 to 233 (RQKESTLRRQERKN) are enriched in basic and acidic residues. Residues 250 to 456 (KHIIVVLDPV…PFKKLRDETT (207 aa)) form a nuclease-like domain; forms the post-nick DNA binding interface and is involved in DNA recognition and bending region. The segment at 476-570 (RGLALVWRRQ…QPHLSLDSAD (95 aa)) is helix-hairpin-helix (2HhH); forms the pre-nick DNA binding interface and is involved in DNA recognition and bending.

It belongs to the EME1/MMS4 family. As to quaternary structure, part of the heterodimeric MUS81-EME1 complex.

It is found in the nucleus. The protein resides in the nucleolus. Non-catalytic subunit of the structure-specific, heterodimeric DNA endonuclease MUS81-EME1 which is involved in the maintenance of genome stability. In the complex, EME1 is required for DNA cleavage, participating in DNA recognition and bending. MUS81-EME1 cleaves 3'-flaps and nicked Holliday junctions, and exhibit limited endonuclease activity with 5' flaps and nicked double-stranded DNAs. Active during prometaphase, MUS81-EME1 resolves mitotic recombination intermediates, including Holliday junctions, which form during homologous recombination. The sequence is that of Structure-specific endonuclease subunit EME1 from Homo sapiens (Human).